The sequence spans 96 residues: Cytochrome c-553 (96 aa).

Positions 1-19 (MKKVIMALGVLAFANALMA) are cleaved as a signal peptide. Cys29, Cys32, His33, and Met73 together coordinate heme c.

Belongs to the cytochrome c family. In terms of processing, binds 1 heme c group covalently per subunit.

It is found in the periplasm. In terms of biological role, natural electron acceptor for a formate dehydrogenase. The sequence is that of Cytochrome c-553 from Helicobacter pylori (strain ATCC 700392 / 26695) (Campylobacter pylori).